The chain runs to 469 residues: ATP synthase subunit beta (469 aa).

Residue 156–163 coordinates ATP; the sequence is GGAGVGKT.

This sequence belongs to the ATPase alpha/beta chains family. In terms of assembly, F-type ATPases have 2 components, CF(1) - the catalytic core - and CF(0) - the membrane proton channel. CF(1) has five subunits: alpha(3), beta(3), gamma(1), delta(1), epsilon(1). CF(0) has three main subunits: a(1), b(2) and c(9-12). The alpha and beta chains form an alternating ring which encloses part of the gamma chain. CF(1) is attached to CF(0) by a central stalk formed by the gamma and epsilon chains, while a peripheral stalk is formed by the delta and b chains.

It is found in the cell membrane. The catalysed reaction is ATP + H2O + 4 H(+)(in) = ADP + phosphate + 5 H(+)(out). Its function is as follows. Produces ATP from ADP in the presence of a proton gradient across the membrane. The catalytic sites are hosted primarily by the beta subunits. The sequence is that of ATP synthase subunit beta from Lactococcus lactis subsp. cremoris (strain MG1363).